The primary structure comprises 155 residues: Ribosomal RNA large subunit methyltransferase H (155 aa).

Residues Leu72, Gly103, and 122 to 127 (LSTMTL) each bind S-adenosyl-L-methionine.

The protein belongs to the RNA methyltransferase RlmH family. Homodimer.

It is found in the cytoplasm. It carries out the reaction pseudouridine(1915) in 23S rRNA + S-adenosyl-L-methionine = N(3)-methylpseudouridine(1915) in 23S rRNA + S-adenosyl-L-homocysteine + H(+). Specifically methylates the pseudouridine at position 1915 (m3Psi1915) in 23S rRNA. This chain is Ribosomal RNA large subunit methyltransferase H, found in Nitrosomonas eutropha (strain DSM 101675 / C91 / Nm57).